We begin with the raw amino-acid sequence, 6668 residues long: Centrosome-associated protein CEP250 (6668 aa).

Coiled-coil stretches lie at residues 562–589 (KAFHEAQLARAREETKTLRQKIAALQQD), 632–666 (TRELTERLQAALAVNESLREELLEARQQLSLLRAS), 873–988 (HTEC…LRSS), 1042–1087 (LRMS…HEAA), 1252–1307 (VEDL…AVSR), 1333–1427 (LESL…LEKK), 1501–1538 (RPAAEEAVERETNLKKELEAAHQQKNEAEEMCKELGTQ), 1594–1688 (REAL…SEVA), 1896–1930 (HDILVGRVEELERMQTELEEQRRMLTKHLQQTTEK), 1975–2224 (EETL…AKQS), 2298–3272 (AEDE…LKME), 3298–3436 (QQEL…SRAE), 3526–3599 (LVQL…AKEE), 3697–3773 (CASL…EERR), 3856–4137 (TEML…VEAE), 4170–4486 (RRKL…LRER), 4515–5078 (LETL…FRRR), 5165–5202 (LASLGQELEEERWQVKQLQELLKEVDSARKEALEQETL), 5298–5731 (LREK…QHRV), and 5927–6119 (TQAL…LWRQ).

Post-translationally, proteolytically cleaved; only the full-length form localizes to the inner core, while processed version also localizes to the outer core during the onset of cell division.

It localises to the cytoplasm. It is found in the cytoskeleton. The protein localises to the microtubule organizing center. Its subcellular location is the centrosome. Functionally, part of the centrosome inner core complex. Required for the linking of centrosomal inner and outer cores. This is Centrosome-associated protein CEP250 from Toxoplasma gondii (strain ATCC 50611 / Me49).